Here is a 73-residue protein sequence, read N- to C-terminus: Dermaseptin-H4 (73 aa).

The signal sequence occupies residues 1-22 (MAFMKKSLFLVLFLGMVSLSIC). The propeptide occupies 23–43 (EEEKRENEDEAKQEDDEQSEM). The disordered stretch occupies residues 25-45 (EKRENEDEAKQEDDEQSEMKR). Residues 30 to 40 (EDEAKQEDDEQ) show a composition bias toward acidic residues. Leu70 carries the leucine amide modification. Residues 72–73 (EQ) constitute a propeptide that is removed on maturation.

In terms of tissue distribution, expressed by the skin glands.

The protein resides in the secreted. In terms of biological role, has antibacterial activity against the Gram-negative bacteria E.coli ATCC 11775 (MIC=0.8 uM), and the Gram-positive bacteria S.aureus ATCC 12600 (MIC=0.4 uM) and M.luteus ATCC 49732 (MIC=0.8 uM). Does not inhibit the growth of the fungus C.albicans. Probably acts by disturbing membrane functions with its amphipathic structure. The chain is Dermaseptin-H4 from Pithecopus azureus (Orange-legged monkey tree frog).